The chain runs to 189 residues: ATP synthase subunit b (189 aa).

Residues 23-43 (IEIVLSLVVFGLLLFAVWKFV) traverse the membrane as a helical segment.

The protein belongs to the ATPase B chain family. As to quaternary structure, F-type ATPases have 2 components, F(1) - the catalytic core - and F(0) - the membrane proton channel. F(1) has five subunits: alpha(3), beta(3), gamma(1), delta(1), epsilon(1). F(0) has three main subunits: a(1), b(2) and c(10-14). The alpha and beta chains form an alternating ring which encloses part of the gamma chain. F(1) is attached to F(0) by a central stalk formed by the gamma and epsilon chains, while a peripheral stalk is formed by the delta and b chains.

It localises to the cell membrane. F(1)F(0) ATP synthase produces ATP from ADP in the presence of a proton or sodium gradient. F-type ATPases consist of two structural domains, F(1) containing the extramembraneous catalytic core and F(0) containing the membrane proton channel, linked together by a central stalk and a peripheral stalk. During catalysis, ATP synthesis in the catalytic domain of F(1) is coupled via a rotary mechanism of the central stalk subunits to proton translocation. Functionally, component of the F(0) channel, it forms part of the peripheral stalk, linking F(1) to F(0). The chain is ATP synthase subunit b from Nocardioides sp. (strain ATCC BAA-499 / JS614).